We begin with the raw amino-acid sequence, 458 residues long: Argininosuccinate lyase (458 aa).

The protein belongs to the lyase 1 family. Argininosuccinate lyase subfamily.

Its subcellular location is the cytoplasm. The catalysed reaction is 2-(N(omega)-L-arginino)succinate = fumarate + L-arginine. It functions in the pathway amino-acid biosynthesis; L-arginine biosynthesis; L-arginine from L-ornithine and carbamoyl phosphate: step 3/3. The sequence is that of Argininosuccinate lyase from Actinobacillus pleuropneumoniae serotype 7 (strain AP76).